A 185-amino-acid polypeptide reads, in one-letter code: Peptidyl-tRNA hydrolase (185 aa).

Tyr14 contacts tRNA. His19 acts as the Proton acceptor in catalysis. TRNA-binding residues include Tyr64, Asn66, and Asn112.

Belongs to the PTH family. Monomer.

It localises to the cytoplasm. The enzyme catalyses an N-acyl-L-alpha-aminoacyl-tRNA + H2O = an N-acyl-L-amino acid + a tRNA + H(+). Hydrolyzes ribosome-free peptidyl-tRNAs (with 1 or more amino acids incorporated), which drop off the ribosome during protein synthesis, or as a result of ribosome stalling. Its function is as follows. Catalyzes the release of premature peptidyl moieties from peptidyl-tRNA molecules trapped in stalled 50S ribosomal subunits, and thus maintains levels of free tRNAs and 50S ribosomes. This Lactiplantibacillus plantarum (strain ATCC BAA-793 / NCIMB 8826 / WCFS1) (Lactobacillus plantarum) protein is Peptidyl-tRNA hydrolase.